An 831-amino-acid polypeptide reads, in one-letter code: uncharacterized protein (831 aa).

The active-site Tele-phosphohistidine intermediate is the His-787.

The protein belongs to the PEP-utilizing enzyme family.

This is an uncharacterized protein from Bacillus subtilis (strain 168).